A 446-amino-acid chain; its full sequence is Methanogenesis regulatory protein FilR1 (446 aa).

The Response regulatory domain occupies 297–416; the sequence is DVMIVEDDLG…QRLPEIAEEA (120 aa). A 4-aspartylphosphate modification is found at aspartate 350.

In terms of processing, phosphorylated by FilI.

In terms of biological role, member of the two-component regulatory system FilI/FilRs, which is involved in the regulation of methanogenesis. Regulates its own expression, expression of the filI-filR2 operon, and of genes involved in methanogenesis such as acs1, acs4 and mtrABC. Acts by binding to the promoters. In Methanothrix harundinacea (strain 6Ac) (Methanosaeta harundinacea), this protein is Methanogenesis regulatory protein FilR1.